Here is a 522-residue protein sequence, read N- to C-terminus: Probable cytochrome P450 12e1, mitochondrial (522 aa).

Cys468 provides a ligand contact to heme.

Belongs to the cytochrome P450 family. Heme is required as a cofactor.

The protein resides in the mitochondrion membrane. The polypeptide is Probable cytochrome P450 12e1, mitochondrial (Cyp12e1) (Drosophila melanogaster (Fruit fly)).